A 311-amino-acid chain; its full sequence is L-lactate dehydrogenase 2 (311 aa).

V14, D35, and R40 together coordinate NAD(+). R90 is a substrate binding site. Residues S103, 120 to 122 (ATN), and T145 contribute to the NAD(+) site. Residue 122-125 (NPCD) participates in substrate binding. Residue 150-153 (DTTR) coordinates substrate. The Proton acceptor role is filled by H177. A substrate-binding site is contributed by T230.

It belongs to the LDH/MDH superfamily. LDH family. In terms of assembly, homotetramer.

It is found in the cytoplasm. The catalysed reaction is (S)-lactate + NAD(+) = pyruvate + NADH + H(+). Its pathway is fermentation; pyruvate fermentation to lactate; (S)-lactate from pyruvate: step 1/1. Catalyzes the conversion of lactate to pyruvate. The sequence is that of L-lactate dehydrogenase 2 from Listeria innocua serovar 6a (strain ATCC BAA-680 / CLIP 11262).